The chain runs to 1326 residues: Putative late blight resistance protein homolog R1B-19 (1326 aa).

Coiled-coil stretches lie at residues 421-444 and 536-558; these read RYSD…ESLQ and PRMK…KLLN. 570 to 577 is an ATP binding site; it reads GMPGLGKT. Residues 611-864 enclose the NB-ARC domain; the sequence is LLSLLCDTIG…KVKTCRLHDV (254 aa). The stretch at 749–770 forms a coiled coil; that stretch reads SEMEKEVECWEQVANNLGTRIH. 9 LRR repeats span residues 953–978, 980–996, 1027–1050, 1053–1070, 1071–1094, 1098–1118, 1119–1146, 1167–1191, and 1208–1230; these read FKFL…VYLK, FSAH…IYNL, LRHL…SAKL, LETL…LNFP, IRLE…ISAP, YLKL…ADHL, KNLE…MFPQ, FPNL…AMNI, and LIEK…AFKR. The HMA domain maps to 1209–1278; that stretch reads IEKKTLKLNL…AWHARVVVPT (70 aa).

This sequence belongs to the disease resistance NB-LRR family.

The protein resides in the cytoplasm. The protein localises to the membrane. Confers resistance to late blight (Phytophthora infestans) races carrying the avirulence gene Avr1. Resistance proteins guard the plant against pathogens that contain an appropriate avirulence protein via an indirect interaction with this avirulence protein. That triggers a defense system including the hypersensitive response, which restricts the pathogen growth. The polypeptide is Putative late blight resistance protein homolog R1B-19 (R1B-19) (Solanum demissum (Wild potato)).